The sequence spans 908 residues: Putative cell signaling protein HAM1 (908 aa).

Disordered regions lie at residues 1 to 24 (MSVAATKSEISHNPGKMSVTSAVS) and 177 to 359 (TKAA…EHRQ). Basic and acidic residues-rich tracts occupy residues 179-192 (AADKSRPSQEKLDS), 231-247 (HPRDDPRDAQLVDDKGK), 261-283 (AKSDAQSKAQDLKSSARDYKETG), 306-321 (EQKEQVKGAAYDKRDA), and 338-359 (NQEKARGKAAALRDRIPEEHRQ). The stretch at 255-282 (YNQAQEAKSDAQSKAQDLKSSARDYKET) forms a coiled coil.

In terms of processing, palmitoylated.

Functionally, may act as a negative regulator of mating during vegetative growth. The polypeptide is Putative cell signaling protein HAM1 (Cryptococcus neoformans var. grubii serotype A (strain H99 / ATCC 208821 / CBS 10515 / FGSC 9487) (Filobasidiella neoformans var. grubii)).